A 512-amino-acid chain; its full sequence is PTS system mannitol-specific EIICB component (512 aa).

Residues 1 to 28 (MSQTEEKKGIGRRVQAFGSFLSSMIMPN) are Cytoplasmic-facing. The 333-residue stretch at 17-349 (FGSFLSSMIM…MKFTREPKQD (333 aa)) folds into the PTS EIIC type-2 domain. Residues 29 to 50 (IGAFIAWGFIAAIFIDNGWLPN) traverse the membrane as a helical segment. Residues 51 to 54 (KDLA) are Extracellular-facing. Residues 55–75 (TLAGPMITYLIPLLIAFSGGR) form a helical membrane-spanning segment. Residues 76 to 139 (LIYDLRGGII…QGFEMLFNNF (64 aa)) lie on the Cytoplasmic side of the membrane. A helical transmembrane segment spans residues 140-161 (SAGILGFIMTIAGFKILAPLMK). Topologically, residues 162–170 (FIMHILSVA) are extracellular. The helical transmembrane segment at 171 to 191 (VEALVHAHLLPLVSILVEPAK) threads the bilayer. Residues 192–278 (IVFLNNAINH…VLMRPLLFIA (87 aa)) lie on the Cytoplasmic side of the membrane. A helical membrane pass occupies residues 279–298 (VILGGMTGVATYQATGFGFK). Over 299–318 (SPASPGSFIVYCLNAPRGEF) the chain is Extracellular. Residues 319–340 (LHMLLGVFLAALVSFVVAALIM) form a helical membrane-spanning segment. The Cytoplasmic segment spans residues 341 to 512 (KFTREPKQDL…LNNLKKDDQA (172 aa)). Residues 355-402 (AQMENTKGKKSSVASKLVSSDKNVNTEENASGNVSETSSSDDDPEALL) are disordered. Positions 365 to 376 (SSVASKLVSSDK) are enriched in low complexity. The segment covering 380–392 (TEENASGNVSETS) has biased composition (polar residues). Residues 419 to 512 (NHVIFACDAG…LNNLKKDDQA (94 aa)) enclose the PTS EIIB type-2 domain. The active-site Phosphocysteine intermediate; for EIIB activity is the Cys425. Position 425 is a phosphocysteine; by EIIA (Cys425).

Homodimer.

It is found in the cell membrane. The enzyme catalyses D-mannitol(out) + N(pros)-phospho-L-histidyl-[protein] = D-mannitol 1-phosphate(in) + L-histidyl-[protein]. Functionally, the phosphoenolpyruvate-dependent sugar phosphotransferase system (sugar PTS), a major carbohydrate active transport system, catalyzes the phosphorylation of incoming sugar substrates concomitantly with their translocation across the cell membrane. The enzyme II CmtAB PTS system is involved in D-mannitol transport. The protein is PTS system mannitol-specific EIICB component (mtlA) of Staphylococcus aureus (strain Mu50 / ATCC 700699).